The primary structure comprises 502 residues: Peroxisomal catalase (502 aa).

Catalysis depends on residues His64 and Asn137. Tyr347 serves as a coordination point for heme. The Microbody targeting signal motif lies at 500 to 502 (AKM).

The protein belongs to the catalase family. Heme serves as cofactor.

It is found in the peroxisome matrix. The catalysed reaction is 2 H2O2 = O2 + 2 H2O. In terms of biological role, catalyzes the degradation of hydrogen peroxide (H(2)O(2)) generated by peroxisomal oxidases to water and oxygen, thereby protecting cells from the toxic effects of hydrogen peroxide. This chain is Peroxisomal catalase, found in Toxoplasma gondii.